We begin with the raw amino-acid sequence, 511 residues long: Sodium/proline symporter (511 aa).

The next 13 membrane-spanning stretches (helical) occupy residues Trp-16–Tyr-36, Ile-53–Met-73, Leu-84–Val-104, Ile-138–Ser-158, Phe-173–Ala-193, Phe-199–Asn-219, Leu-239–Phe-259, Ile-285–Phe-305, Val-326–Ser-346, Phe-380–Trp-400, Leu-409–Leu-429, Ala-437–Ile-457, and Ile-466–Val-486.

The protein belongs to the sodium:solute symporter (SSF) (TC 2.A.21) family.

The protein localises to the cell membrane. It carries out the reaction L-proline(in) + Na(+)(in) = L-proline(out) + Na(+)(out). Functionally, catalyzes the sodium-dependent uptake of extracellular L-proline. Since most S.aureus strains are L-proline auxotrophs, this transporter may aid the bacterial persistence during an infection of tissues with low proline concentrations. The polypeptide is Sodium/proline symporter (Staphylococcus aureus).